The primary structure comprises 1038 residues: Kinesin-like protein KIN-5B (1038 aa).

The interval 1 to 63 is disordered; the sequence is MAQTPNPSRR…GGGGGGGSEM (63 aa). The span at 24 to 34 shows a compositional bias: basic and acidic residues; the sequence is RPERRQLELRW. The segment covering 49–61 has biased composition (gly residues); sequence GLTGGGGGGGGGS. The Kinesin motor domain occupies 69–410; the sequence is NVQVVLRCRP…LDYAYRAKSI (342 aa). 154–161 is a binding site for ATP; sequence GQTGTGKT. Residues 453-502 are a coiled coil; the sequence is QERFALEEAEKKTMRDKIEYLETQNKELKMNIESCKKEYLDLEEAHSRAN. The disordered stretch occupies residues 1013–1038; sequence DKGKRYVDQGTRTPRSPLMPVNHYNK.

It belongs to the TRAFAC class myosin-kinesin ATPase superfamily. Kinesin family. KIN-5/BimC subfamily.

The protein localises to the cytoplasm. It localises to the cytoskeleton. Its subcellular location is the spindle. Responsible for microtubule translocation. May be important for the organization of phragmoplast-specific arrays of microtubules. Plays an essential role in stabilizing the mitotic spindle. Required during mitotic cytokinesis. The chain is Kinesin-like protein KIN-5B from Oryza sativa subsp. japonica (Rice).